Consider the following 544-residue polypeptide: High affinity immunoglobulin alpha and immunoglobulin mu Fc receptor (544 aa).

A signal peptide spans 1–16 (MPLFLILCLLQGSSFA). Residues 17–462 (LPQKRPHPRW…TFPEDESSSR (446 aa)) lie on the Extracellular side of the membrane. The Ig-like V-type domain occupies 61–169 (PNALKGSRLV…NMLFLSMNLT (109 aa)). The segment at 75 to 97 (GGAVTIQCHYAPSSVNRHQRKYW) is mediates immunoglobulin Fc fragment-binding. The cysteines at positions 82 and 153 are disulfide-linked. Asn167 is a glycosylation site (N-linked (GlcNAc...) asparagine). The segment at 218-325 (DTVASTPGTS…TTKADRPRED (108 aa)) is disordered. Polar residues-rich tracts occupy residues 220–232 (VAST…TTAS) and 280–291 (ASKSRSMSNTTE). A compositionally biased stretch (basic and acidic residues) spans 307 to 325 (ASKDRREITTTKADRPRED). Residues 463–483 (TLAPVSTMLALFMLMALVLLQ) traverse the membrane as a helical segment. Over 484-544 (RKLRRRRTSQ…LTAPERNPGP (61 aa)) the chain is Cytoplasmic. Positions 511–544 (PQPDQLPHVERKMLQDDSLPAGASLTAPERNPGP) are disordered.

In terms of assembly, interacts with IGHM; this interaction facilitates the endocytosis of IgM-coated microbes or IgM-antigen immune complexes. Post-translationally, N-glycosylated.

It is found in the cell membrane. In terms of biological role, functions as a receptor for the Fc fragment of IgA and IgM. Binds IgA and IgM with high affinity and mediates their endocytosis. May function in the immune response to microbes mediated by IgA and IgM. In Pongo abelii (Sumatran orangutan), this protein is High affinity immunoglobulin alpha and immunoglobulin mu Fc receptor (FCAMR).